Here is a 152-residue protein sequence, read N- to C-terminus: uncharacterized protein (152 aa).

5 helical membrane-spanning segments follow: residues 2-22 (GVVF…LKLM), 33-53 (LKMI…WLIM), 58-78 (FLIE…LIYL), 97-117 (FMGN…IEYV), and 122-142 (IASP…FFNC).

It is found in the cell membrane. This is an uncharacterized protein from Methanocaldococcus jannaschii (strain ATCC 43067 / DSM 2661 / JAL-1 / JCM 10045 / NBRC 100440) (Methanococcus jannaschii).